The sequence spans 490 residues: ATP synthase subunit beta, chloroplastic (490 aa).

170–177 serves as a coordination point for ATP; that stretch reads GGAGVGKT.

Belongs to the ATPase alpha/beta chains family. F-type ATPases have 2 components, CF(1) - the catalytic core - and CF(0) - the membrane proton channel. CF(1) has five subunits: alpha(3), beta(3), gamma(1), delta(1), epsilon(1). CF(0) has four main subunits: a(1), b(1), b'(1) and c(9-12).

The protein localises to the plastid. It is found in the chloroplast thylakoid membrane. It carries out the reaction ATP + H2O + 4 H(+)(in) = ADP + phosphate + 5 H(+)(out). Functionally, produces ATP from ADP in the presence of a proton gradient across the membrane. The catalytic sites are hosted primarily by the beta subunits. The protein is ATP synthase subunit beta, chloroplastic of Ipomoea wrightii (Wright's morning glory).